A 202-amino-acid chain; its full sequence is Coiled-coil domain-containing protein 85B (202 aa).

The residue at position 1 (M1) is an N-acetylmethionine. 2 coiled-coil regions span residues R44–C82 and Q118–C141. Residues G152–A162 are compositionally biased toward gly residues. Positions G152 to D202 are disordered. Residues D180–S190 show a composition bias toward low complexity.

The protein belongs to the CCDC85 family. As to quaternary structure, interacts with CEBPB. May interact with CEBPD. Interacts with EURL. Interacts with MCRS1. Interacts with TCF7L2; competes with CTNNB1. Interacts with ANKRD26. Interacts with the beta-catenin family proteins ARVCF, CTNND1, CTNND2 and PKP4. As to expression, expressed in white and brown adipose tissue.

It is found in the nucleus. It localises to the cytoplasm. The protein localises to the cytoskeleton. Its subcellular location is the microtubule organizing center. The protein resides in the centrosome. It is found in the cell junction. It localises to the adherens junction. In terms of biological role, functions as a transcriptional repressor. May inhibit the activity of CTNNB1 in a TP53-dependent manner and thus regulate cell growth. May function in adipocyte differentiation, negatively regulating mitotic clonal expansion. Plays a role in cell-cell adhesion and epithelium development through its interaction with proteins of the beta-catenin family. The chain is Coiled-coil domain-containing protein 85B (Ccdc85b) from Mus musculus (Mouse).